The primary structure comprises 255 residues: Triosephosphate isomerase (255 aa).

10–12 (NWK) serves as a coordination point for substrate. The active-site Electrophile is the His96. Glu168 serves as the catalytic Proton acceptor. Substrate is bound by residues Gly174, Ser213, and 234–235 (GG).

Belongs to the triosephosphate isomerase family. In terms of assembly, homodimer.

It localises to the cytoplasm. It catalyses the reaction D-glyceraldehyde 3-phosphate = dihydroxyacetone phosphate. It participates in carbohydrate biosynthesis; gluconeogenesis. The protein operates within carbohydrate degradation; glycolysis; D-glyceraldehyde 3-phosphate from glycerone phosphate: step 1/1. In terms of biological role, involved in the gluconeogenesis. Catalyzes stereospecifically the conversion of dihydroxyacetone phosphate (DHAP) to D-glyceraldehyde-3-phosphate (G3P). This is Triosephosphate isomerase from Histophilus somni (strain 2336) (Haemophilus somnus).